The primary structure comprises 562 residues: mRNA cleavage and polyadenylation factor CLP1 (562 aa).

A disordered region spans residues 1 to 27 (MSLPGLELSQQPIEARRAPPQPTQISL). Residues glutamate 32, lysine 71, and 154–159 (DAGKTS) each bind ATP. A disordered region spans residues 415-483 (EDEYDPSKFD…STTPFTNLPS (69 aa)). Low complexity predominate over residues 445–479 (SLQPPSGLLPGLRSELPSATTGFPSASTSSTTPFT).

Belongs to the Clp1 family. Clp1 subfamily. Component of a pre-mRNA cleavage factor complex. Interacts directly with PCF11.

Its subcellular location is the nucleus. Required for endonucleolytic cleavage during polyadenylation-dependent pre-mRNA 3'-end formation. In Coccidioides immitis (strain RS) (Valley fever fungus), this protein is mRNA cleavage and polyadenylation factor CLP1.